The following is a 426-amino-acid chain: Dihydroorotase (426 aa).

2 residues coordinate Zn(2+): histidine 55 and histidine 57. Substrate-binding positions include histidine 57 to arginine 59 and asparagine 89. 4 residues coordinate Zn(2+): aspartate 147, histidine 174, histidine 233, and aspartate 306. The active site involves aspartate 306. Substrate contacts are provided by residues histidine 310 and phenylalanine 324 to glycine 325.

This sequence belongs to the metallo-dependent hydrolases superfamily. DHOase family. Class I DHOase subfamily. Zn(2+) serves as cofactor.

It carries out the reaction (S)-dihydroorotate + H2O = N-carbamoyl-L-aspartate + H(+). It participates in pyrimidine metabolism; UMP biosynthesis via de novo pathway; (S)-dihydroorotate from bicarbonate: step 3/3. Functionally, catalyzes the reversible cyclization of carbamoyl aspartate to dihydroorotate. The sequence is that of Dihydroorotase from Thermus aquaticus.